Here is a 637-residue protein sequence, read N- to C-terminus: MSQQETHGFQTEVKQLLHLMIHSLYSNKEIFLRELVSNAADAADKLRYLALTNDALYEGDGELRVRISADKEKGTVTIEDNGVGMTRDGVIEHLGTIAKSGTAEFFKNLSGEASKDSQLIGQFGVGFYSAFIVAKKVTVRTRAAGHKANEAVLWESEGEGSFTVDTITKASRGTEITLHLRDEEKEFADEWRLRSIITKYSDHISVPVEMWQEGTPERDGPDGEKIPATEGYWKVMNKATALWMRNKSEISDEEYQEFYKHISHDYTDALLWSHNRVEGKQEYTNLLYIPSKAPWDLWNRDRKHGLKLFVQRVFIMDDAEQFMPSYLRFVQGLIDSNDLPLNVSREILQDNHITKAMRTGITKRVLGMLEKLAKDDAEKYQQFWAEFGQVLKEGPAEDFANRERIAGLLRFASTHTGSAAPTVSLDDYLSRMKEGQTKIYYIVADSHEAAANSPHLELLRKKGIEVLLMSERIDEWLINHLTEYKEKQLHSVTRGELELGELEDAAEKEAQEKLAEESAPLVERIKAALGASVADVKVTSRLTDTPACVVTGEGEMSSQMIKLMQAAGQPVPEVKPTFEINPAHPLVSRLNDLQDEAAFADWSNLLLQQAQLSEKGSLADPSAFIKLMNQMLLANLK.

The a; substrate-binding stretch occupies residues 1–345 (MSQQETHGFQ…SNDLPLNVSR (345 aa)). The tract at residues 346–562 (EILQDNHITK…EGEMSSQMIK (217 aa)) is b. The interval 563–637 (LMQAAGQPVP…MNQMLLANLK (75 aa)) is c.

It belongs to the heat shock protein 90 family. In terms of assembly, homodimer.

It localises to the cytoplasm. Functionally, molecular chaperone. Has ATPase activity. This is Chaperone protein HtpG from Shewanella sp. (strain MR-4).